The primary structure comprises 293 residues: Non-homologous end joining protein Ku (293 aa).

Positions 10-195 constitute a Ku domain; sequence ISFGLVHIPV…KLDKRELEMA (186 aa). Residues 216 to 229 are required for dimerization; sequence SDKIMKLVEEKAAK. Residues 260–293 form a disordered region; that stretch reads RSRAGGGKDKGSEKAGADAKGRAKSGASRSRRKA. Positions 265-280 are enriched in basic and acidic residues; the sequence is GGKDKGSEKAGADAKG.

The protein belongs to the prokaryotic Ku family. Homodimer, may form higher-order multimers on DNA. Non-dimerized protein does not stimulate LigD ligase activity. Probably interacts with LigD.

Its function is as follows. With LigD forms a non-homologous end joining (NHEJ) DNA repair enzyme, which repairs dsDNA breaks with reduced fidelity. Stimulates rNTP addition to DSB and end joining (ligation) of linear DNA by LigD, on 3'-overhangs and probably also 5'-overhangs and blunt dsDNA breaks. Binds both ends of linear dsDNA protecting it from exonuclease activity. The chain is Non-homologous end joining protein Ku from Pseudomonas aeruginosa (strain ATCC 15692 / DSM 22644 / CIP 104116 / JCM 14847 / LMG 12228 / 1C / PRS 101 / PAO1).